Reading from the N-terminus, the 395-residue chain is G-protein coupled receptor 182 (395 aa).

Over Met-1–Phe-53 the chain is Extracellular. Residues Asn-24 and Asn-33 are each glycosylated (N-linked (GlcNAc...) asparagine). A helical membrane pass occupies residues Val-54–Cys-75. The Cytoplasmic portion of the chain corresponds to Arg-76–Leu-86. The helical transmembrane segment at Tyr-87–Val-109 threads the bilayer. Residues Met-110–Arg-123 lie on the Extracellular side of the membrane. A disulfide bond links Cys-122 and Cys-198. Residues Phe-124–Ile-145 form a helical membrane-spanning segment. The Cytoplasmic segment spans residues Asp-146–Arg-166. The chain crosses the membrane as a helical span at residues Arg-167 to Gln-189. Residues Leu-190–Ala-213 lie on the Extracellular side of the membrane. The chain crosses the membrane as a helical span at residues Val-214–Ile-235. Topologically, residues Leu-236–Leu-254 are cytoplasmic. A helical membrane pass occupies residues Leu-255–Leu-276. At Leu-277 to Tyr-295 the chain is on the extracellular side. A helical membrane pass occupies residues Phe-296 to Tyr-316. Over Asn-317 to Leu-395 the chain is Cytoplasmic. Ser-329 bears the Phosphoserine mark.

This sequence belongs to the G-protein coupled receptor 1 family. As to expression, expressed in liver and lung.

It localises to the cell membrane. Functionally, orphan receptor. This is G-protein coupled receptor 182 (Gpr182) from Mus musculus (Mouse).